Reading from the N-terminus, the 879-residue chain is Nuclear autoantigen Sp-100 (879 aa).

Residue Ala-2 is modified to N-acetylalanine. Ser-18 is subject to Phosphoserine. One can recognise an HSR domain in the interval 33-149; it reads DLQRMFTEDQ…IYKGFENVIH (117 aa). The tract at residues 154–245 is disordered; that stretch reads LQESEEEERE…EQCAQKAEPT (92 aa). Ser-157 is subject to Phosphoserine. The short motif at 165–168 is the D-box; recognition signal for CDC20-mediated degradation element; that stretch reads RSGL. Phosphoserine occurs at positions 171, 180, and 228. Residues 176–200 show a composition bias toward polar residues; that stretch reads TGENSFRSLTWPPSGSPSHAGTTPP. A compositionally biased stretch (basic and acidic residues) spans 207 to 228; it reads HPCETEQINAKRKDTTSDKDDS. Polar residues predominate over residues 229-238; it reads LGSQQTNEQC. Residue Lys-241 forms a Glycyl lysine isopeptide (Lys-Gly) (interchain with G-Cter in SUMO2) linkage. Positions 284–297 match the PxVxL motif motif; the sequence is IQINSCSVRLVDIK. A Glycyl lysine isopeptide (Lys-Gly) (interchain with G-Cter in SUMO) cross-link involves residue Lys-297. Residues Lys-300 and Lys-306 each participate in a glycyl lysine isopeptide (Lys-Gly) (interchain with G-Cter in SUMO2) cross-link. A phosphoserine mark is found at Ser-331 and Ser-362. The tract at residues 333–478 is sufficient to mediate interaction with ETS1; it reads GSTDVDEPLE…SSSLRRGSGS (146 aa). The segment at 345–386 is disordered; it reads ISAPRSEPVINNDNPLESNDEKEGQEATCSRPQIVPEPMDFR. Glycyl lysine isopeptide (Lys-Gly) (interchain with G-Cter in SUMO2) cross-links involve residues Lys-366 and Lys-387. 5 positions are modified to phosphoserine: Ser-394, Ser-407, Ser-409, Ser-410, and Ser-451. Positions 401-596 are disordered; that stretch reads GQDHDFSESS…KRGPRIPKDE (196 aa). Polar residues predominate over residues 466 to 482; the sequence is ETCSSSLRRGSGSQPQE. Positions 530-591 are enriched in basic residues; that stretch reads SGKRRKKRRH…LKRRRKRGPR (62 aa). 2 short sequence motifs (nuclear localization signal) span residues 536 to 553 and 568 to 592; these read KRRH…RKKD and KRWQ…GPRI. Lys-594 participates in a covalent cross-link: Glycyl lysine isopeptide (Lys-Gly) (interchain with G-Cter in SUMO2). The region spanning 595–676 is the SAND domain; it reads DENINFKQSE…KVLMENKFLP (82 aa). DNA-binding regions (HMG box) lie at residues 677-753 and 769-837; these read EPPS…KTYI and PKRP…AAYR. Positions 717 to 734 match the Nuclear localization signal motif; sequence KKCSETWKTIFAKEKGKF. Positions 835-879 are disordered; it reads AYRAKGKPNSAKKRVVKAEKSKKKKEEEEDEEDEQEEENEEDDDK. The span at 838-857 shows a compositional bias: basic residues; sequence AKGKPNSAKKRVVKAEKSKK. The span at 861 to 879 shows a compositional bias: acidic residues; the sequence is EEEDEEDEQEEENEEDDDK.

As to quaternary structure, homodimer; isoforms are able to heterodimerize. Interacts with members of the HP1 family of nonhistone chromosomal protein, such as CBX5 and CBX3 via the PxVxL motif. Interacts with ETS1; the interaction is direct and modulates ETS1 transcriptional activity. Interacts with the MRN complex which is composed of two heterodimers RAD50/MRE11 associated with a single NBN; recruits the complex to PML-related bodies. Interacts with HIPK2; positively regulates TP53-dependent transcription. Interacts with CASP8AP2; may negatively regulate CASP8AP2 export from the nucleus to the cytoplasm. Interacts with SUMO1P1/SUMO5. (Microbial infection) Interacts with Epstein-Barr virus EBNA-LP; this interaction is important for EBNA-LP coactivator activity. In terms of assembly, (Microbial infection) Interacts with human cytomegalovirus/HHV-5 protein UL123; may play a role in infection by the virus. In terms of processing, sumoylated. Sumoylation depends on a functional nuclear localization signal but is not necessary for nuclear import or nuclear body targeting. Post-translationally, sumoylated. Sumoylated with SUMO1. Sumoylation depends on a functional nuclear localization signal but is not necessary for nuclear import or nuclear body targeting. Sumoylation may stabilize the interaction with CBX5. (Microbial infection) Immediate early protein IE1 of human cytomegalovirus (HHV-5) interferes with the sumoylation of SP100. Widely expressed. Sp100-B is expressed only in spleen, tonsil, thymus, mature B-cell line and some T-cell line, but not in brain, liver, muscle or non-lymphoid cell lines.

The protein resides in the nucleus. It localises to the PML body. The protein localises to the nuclear body. It is found in the cytoplasm. Its function is as follows. Together with PML, this tumor suppressor is a major constituent of the PML bodies, a subnuclear organelle involved in a large number of physiological processes including cell growth, differentiation and apoptosis. Functions as a transcriptional coactivator of ETS1 and ETS2 according to PubMed:11909962. Under certain conditions, it may also act as a corepressor of ETS1 preventing its binding to DNA according to PubMed:15247905. Through the regulation of ETS1 it may play a role in angiogenesis, controlling endothelial cell motility and invasion. Through interaction with the MRN complex it may be involved in the regulation of telomeres lengthening. May also regulate TP53-mediated transcription and through CASP8AP2, regulate FAS-mediated apoptosis. Also plays a role in infection by viruses, including human cytomegalovirus and Epstein-Barr virus, through mechanisms that may involve chromatin and/or transcriptional regulation. The protein is Nuclear autoantigen Sp-100 (SP100) of Homo sapiens (Human).